A 975-amino-acid chain; its full sequence is Synaptopodin 2-like protein (975 aa).

Residues 6–85 form the PDZ domain; the sequence is EVQVTLAGGA…QLVLTVRRVT (80 aa). 3 disordered regions span residues 18-41, 86-214, and 314-349; these read GFRLQGGTEQRKPLQIRRRSQAGR, DEGS…PAEA, and AGTGTEEEDGIPPTSESELDEETFSDARSLTNQSDW. Phosphoserine occurs at positions 105 and 108. T138 is subject to Phosphothreonine. Residues S140, S163, S175, and S177 each carry the phosphoserine modification. Residues 187–200 are compositionally biased toward polar residues; that stretch reads GSPSQGDSRVSSPS. Over residues 202-214 the composition is skewed to low complexity; it reads EEGAALQPPPAEA. Residues 339–349 show a composition bias toward polar residues; sequence DARSLTNQSDW. Phosphoserine is present on residues S342, S347, S371, S378, and S381. An omega-N-methylarginine mark is found at R383, R463, R466, and R476. The interval 491 to 649 is disordered; the sequence is KVNEGLGSTS…ETKNSPNPEL (159 aa). Over residues 502–516 the composition is skewed to pro residues; the sequence is APSPFAAPPQGPTPL. The span at 519–528 shows a compositional bias: polar residues; it reads FTTVVPSHTP. 2 stretches are compositionally biased toward low complexity: residues 530 to 540 and 571 to 580; these read SGASSSTQRSS and SAAAMTSTAS. S667 and S675 each carry phosphoserine. Residues 687–731 form a disordered region; it reads LGGRSYKTLPQVSPKTPPPMAPKTPPPTTPKTPPPVAPKPGSRGL. Residues 701–724 are compositionally biased toward pro residues; the sequence is KTPPPMAPKTPPPTTPKTPPPVAP. Residues T702 and T710 each carry the phosphothreonine modification. At R754 the chain carries Omega-N-methylarginine. Residues 772–797 are disordered; that stretch reads EATSGSSLNPGLRPRSPSPTPSLPPS. Phosphoserine occurs at positions 787 and 789. At T791 the chain carries Phosphothreonine. 3 positions are modified to omega-N-methylarginine: R805, R825, and R888. S890 is modified (phosphoserine). A phosphothreonine mark is found at T891 and T897. R909 is modified (omega-N-methylarginine). An Asymmetric dimethylarginine; alternate modification is found at R920. Omega-N-methylarginine; alternate is present on R920. Omega-N-methylarginine is present on residues R953 and R955.

The protein belongs to the synaptopodin family.

The protein resides in the cytoplasm. It is found in the cytoskeleton. Actin-associated protein that may play a role in modulating actin-based shape. In Mus musculus (Mouse), this protein is Synaptopodin 2-like protein (Synpo2l).